The sequence spans 195 residues: Thymidine kinase (195 aa).

Residues 9 to 16 (STMNAGKS) and 87 to 90 (DEAQ) each bind ATP. Glutamate 88 acts as the Proton acceptor in catalysis. Residues cysteine 145, cysteine 147, cysteine 182, and histidine 185 each contribute to the Zn(2+) site.

It belongs to the thymidine kinase family. As to quaternary structure, homotetramer.

It localises to the cytoplasm. It catalyses the reaction thymidine + ATP = dTMP + ADP + H(+). This Mannheimia succiniciproducens (strain KCTC 0769BP / MBEL55E) protein is Thymidine kinase.